The chain runs to 390 residues: ATP-sensitive inward rectifier potassium channel 11 (390 aa).

Topologically, residues 1-65 (MLSRKGIIPE…LQDVFTTLVD (65 aa)) are cytoplasmic. ATP is bound by residues Asn48 and Arg50. A helical membrane pass occupies residues 66–92 (LKWTHTLLIFTMSFLCSWLLFAMVWWL). Residues 93–116 (IAFAHGDLAPGEGAAVPCVTSIHS) lie on the Extracellular side of the membrane. The cysteines at positions 110 and 142 are disulfide-linked. An intramembrane region (discontinuously helical; Pore-forming) is located at residues 117-133 (FSSAFLFSIEVQVTIGF). Positions 130 and 133 each coordinate K(+). Positions 130-135 (TIGFGG) match the Selectivity filter motif. Topologically, residues 134-142 (GGRMVTEEC) are extracellular. Residues 143-171 (PLAILILIVQNIVGLMINAIMLGCIFMKT) traverse the membrane as a helical segment. The Cytoplasmic segment spans residues 172–390 (AQAHRRAETL…KFSISPDSLS (219 aa)). Position 176 (Arg176) interacts with a 1,2-diacyl-sn-glycero-3-phospho-(1D-myo-inositol-4,5-bisphosphate). Residue Tyr330 participates in ATP binding. A Phosphothreonine; by MAPK1 modification is found at Thr341. The residue at position 385 (Ser385) is a Phosphoserine; by MAPK1.

Belongs to the inward rectifier-type potassium channel (TC 1.A.2.1) family. KCNJ11 subfamily. As to quaternary structure, homotetramer; the homotetramer binds four ATP molecules (one ATP per subunit). Forms an heterooctamer with ABCC8/SUR1; one KCNJ11 homotetramer interacts with four ABCC8/SUR1 molecules. Interacts with ABCC9/SUR2. Post-translationally, phosphorylation by MAPK1 results in changes in channel gating that destabilize the closed states and reduce the ATP sensitivity.

The protein resides in the membrane. The enzyme catalyses K(+)(in) = K(+)(out). Its activity is regulated as follows. KATP channels are regulated by cytoplasmic ATP/ADP ratios; ATP inhibits the channel by closing the pore, while ADP activates the channel. Activated by phosphatidylinositol 4,5-biphosphate (PtdIns(4,5)P2). In terms of biological role, inward rectifier potassium channel that forms the pore of ATP-sensitive potassium channels (KATP), regulating potassium permeability as a function of cytoplasmic ATP and ADP concentrations in many different cells. Inward rectifier potassium channels are characterized by a greater tendency to allow potassium to flow into the cell rather than out of it. Their voltage dependence is regulated by the concentration of extracellular potassium; as external potassium is raised, the voltage range of the channel opening shifts to more positive voltages. The inward rectification is mainly due to the blockage of outward current by internal magnesium. Can be blocked by extracellular barium. In pancreatic cells, it forms KATP channels with ABCC8/SUR1. Can form cardiac and smooth muscle-type KATP channels with ABCC9. This chain is ATP-sensitive inward rectifier potassium channel 11 (KCNJ11), found in Oryctolagus cuniculus (Rabbit).